The chain runs to 916 residues: Translation initiation factor IF-2 (916 aa).

Residues 55–324 are disordered; sequence EPKAVTPTSK…NHNANLKPVT (270 aa). Over residues 77–88 the composition is skewed to low complexity; sequence AAEPKAAATKPA. Composition is skewed to basic and acidic residues over residues 98 to 121, 129 to 161, and 198 to 212; these read FKAE…ERRN, RQKD…DNRN, and RQSE…EAKR. Over residues 227–250 the composition is skewed to low complexity; the sequence is KEQPTVEAAATAAPQAQPQTVEQV. A compositionally biased stretch (basic and acidic residues) spans 264-281; sequence ARPDKSRDFSHENEDGPK. Residues 291 to 304 are compositionally biased toward low complexity; that stretch reads KQNQVRNQKNSNWN. Basic residues predominate over residues 305 to 314; it reads KKNKKSKNNR. The region spanning 418–585 is the tr-type G domain; that stretch reads ERAPVVTIMG…TVLLVAEIQE (168 aa). The tract at residues 427–434 is G1; that stretch reads GHVDHGKT. Residue 427–434 participates in GTP binding; it reads GHVDHGKT. The G2 stretch occupies residues 452-456; sequence GITQH. The segment at 473 to 476 is G3; it reads DTPG. Residues 473-477 and 527-530 each bind GTP; these read DTPGH and NKID. The segment at 527–530 is G4; sequence NKID. The tract at residues 563–565 is G5; sequence SAK.

It belongs to the TRAFAC class translation factor GTPase superfamily. Classic translation factor GTPase family. IF-2 subfamily.

The protein localises to the cytoplasm. Functionally, one of the essential components for the initiation of protein synthesis. Protects formylmethionyl-tRNA from spontaneous hydrolysis and promotes its binding to the 30S ribosomal subunits. Also involved in the hydrolysis of GTP during the formation of the 70S ribosomal complex. This Streptococcus mutans serotype c (strain ATCC 700610 / UA159) protein is Translation initiation factor IF-2.